The chain runs to 355 residues: Blue-sensitive opsin P467 (355 aa).

Topologically, residues Met1–Lys36 are extracellular. N-linked (GlcNAc...) asparagine glycosylation is found at Asn2 and Asn15. Residues Phe37–Val61 form a helical membrane-spanning segment. Topologically, residues Thr62–Asn73 are cytoplasmic. The chain crosses the membrane as a helical span at residues Tyr74 to Ser98. At Trp99–Glu113 the chain is on the extracellular side. The cysteines at positions 110 and 187 are disulfide-linked. A helical membrane pass occupies residues Gly114 to Ile133. The Cytoplasmic segment spans residues Glu134–His152. A helical transmembrane segment spans residues Ala153–Ser176. Topologically, residues Arg177–Ser202 are extracellular. Asn200 carries N-linked (GlcNAc...) asparagine glycosylation. Residues Tyr203–Val230 form a helical membrane-spanning segment. Over Arg231–Arg252 the chain is Cytoplasmic. A helical transmembrane segment spans residues Met253–Phe276. Topologically, residues Thr277–Ser284 are extracellular. Residues Val285 to Leu309 traverse the membrane as a helical segment. Lys296 is modified (N6-(retinylidene)lysine). Topologically, residues Asn310–Ala355 are cytoplasmic. The tract at residues Val333–Ala355 is disordered. The span at Ser334 to Ala355 shows a compositional bias: low complexity.

This sequence belongs to the G-protein coupled receptor 1 family. Opsin subfamily. In terms of processing, phosphorylated on some or all of the serine and threonine residues present in the C-terminal region. In terms of tissue distribution, in this lizard the color pigments are found in the rod-shaped photoreceptor cells which have been derived from ancestral cone-like photoreceptors.

The protein resides in the membrane. Functionally, visual pigments are the light-absorbing molecules that mediate vision. They consist of an apoprotein, opsin, covalently linked to cis-retinal. The sequence is that of Blue-sensitive opsin P467 from Gekko gecko (Tokay gecko).